Reading from the N-terminus, the 254-residue chain is uncharacterized protein (254 aa).

Positions 163-182 are disordered; sequence PNKHTQHKRSTRRTSPKDYN. Positions 166-176 are enriched in basic residues; that stretch reads HTQHKRSTRRT. Residues 207–227 traverse the membrane as a helical segment; the sequence is AHSAWILIIIIIIIVVILFFF.

It belongs to the RL11 family.

It is found in the host membrane. This is an uncharacterized protein from Human cytomegalovirus (strain Merlin) (HHV-5).